An 82-amino-acid polypeptide reads, in one-letter code: Small ribosomal subunit protein bS16 (82 aa).

This sequence belongs to the bacterial ribosomal protein bS16 family.

This chain is Small ribosomal subunit protein bS16, found in Dehalococcoides mccartyi (strain ATCC BAA-2266 / KCTC 15142 / 195) (Dehalococcoides ethenogenes (strain 195)).